The sequence spans 91 residues: Chorion class B protein M3A5 (91 aa).

The segment at 1–51 (VASENRYEGTVGVSGNLPFLGTADVAGEFPTAGIGEILYGCGNGAVGITRE) is central domain. Residues 52–91 (GGLGYGAGYGGGYGLGYGGYGGGYGLGYGGYGGCGCGCGY) are right arm (Gly-rich tandem repeats).

The protein belongs to the chorion protein family.

Functionally, this protein is one of many from the eggshell of the silk moth. In Bombyx mori (Silk moth), this protein is Chorion class B protein M3A5.